The sequence spans 260 residues: Shikimate dehydrogenase (NADP(+)) (260 aa).

Shikimate contacts are provided by residues 14–16 (SAS) and Thr-60. Lys-64 (proton acceptor) is an active-site residue. Shikimate-binding residues include Asn-85 and Asp-100. NADP(+) is bound by residues 121–125 (GAGGA), 145–150 (NRTYER), and Phe-201. Tyr-203 contributes to the shikimate binding site. An NADP(+)-binding site is contributed by Gly-225.

Belongs to the shikimate dehydrogenase family. Homodimer.

It catalyses the reaction shikimate + NADP(+) = 3-dehydroshikimate + NADPH + H(+). It participates in metabolic intermediate biosynthesis; chorismate biosynthesis; chorismate from D-erythrose 4-phosphate and phosphoenolpyruvate: step 4/7. Functionally, involved in the biosynthesis of the chorismate, which leads to the biosynthesis of aromatic amino acids. Catalyzes the reversible NADPH linked reduction of 3-dehydroshikimate (DHSA) to yield shikimate (SA). The chain is Shikimate dehydrogenase (NADP(+)) from Pyrobaculum neutrophilum (strain DSM 2338 / JCM 9278 / NBRC 100436 / V24Sta) (Thermoproteus neutrophilus).